The primary structure comprises 538 residues: Probable cytochrome P450 309a2 (538 aa).

Cys483 is a binding site for heme.

Belongs to the cytochrome P450 family. Heme serves as cofactor.

It is found in the endoplasmic reticulum membrane. Its subcellular location is the microsome membrane. Its function is as follows. May be involved in the metabolism of insect hormones and in the breakdown of synthetic insecticides. This is Probable cytochrome P450 309a2 (Cyp309a2) from Drosophila melanogaster (Fruit fly).